Consider the following 398-residue polypeptide: uncharacterized protein (398 aa).

Positions methionine 1–alanine 22 are cleaved as a signal peptide. Cysteine 23 carries the N-palmitoyl cysteine lipid modification. The S-diacylglycerol cysteine moiety is linked to residue cysteine 23.

The protein localises to the cell membrane. This is an uncharacterized protein from Mycoplasma genitalium (strain ATCC 33530 / DSM 19775 / NCTC 10195 / G37) (Mycoplasmoides genitalium).